Reading from the N-terminus, the 201-residue chain is Peptide deformylase (201 aa).

Positions 1–17 (MANNFSQLARKSKTNSP) are enriched in polar residues. Residues 1-24 (MANNFSQLARKSKTNSPIEKVSKE) form a disordered region. The Fe cation site is built by C121 and H163. The active site involves E164. A Fe cation-binding site is contributed by H167.

This sequence belongs to the polypeptide deformylase family. Fe(2+) is required as a cofactor.

The enzyme catalyses N-terminal N-formyl-L-methionyl-[peptide] + H2O = N-terminal L-methionyl-[peptide] + formate. Its function is as follows. Removes the formyl group from the N-terminal Met of newly synthesized proteins. Requires at least a dipeptide for an efficient rate of reaction. N-terminal L-methionine is a prerequisite for activity but the enzyme has broad specificity at other positions. In Prochlorococcus marinus subsp. pastoris (strain CCMP1986 / NIES-2087 / MED4), this protein is Peptide deformylase.